The following is a 63-amino-acid chain: uncharacterized protein (63 aa).

This is an uncharacterized protein from Acidianus bottle-shaped virus (isolate Italy/Pozzuoli) (ABV).